Consider the following 105-residue polypeptide: Structural protein 11 (105 aa).

Positions 59–97 (NLIKSIQRARDVSEGEARELKDDMVTELEKAETKEERRD) form a coiled coil.

Its subcellular location is the virion. The polypeptide is Structural protein 11 (His1 virus (isolate Australia/Victoria) (His1V)).